The primary structure comprises 2171 residues: Voltage-dependent L-type calcium channel subunit alpha-1C (2171 aa).

The Cytoplasmic segment spans residues 1 to 154 (MLRALVQPAT…RACISIVEWK (154 aa)). Positions 77–98 (GAALSWQAAIDAARQAKLMGSA) are calmodulin-binding. Residues 103–128 (ISTVSSTQRKRQQYGKPKKQGSTTAT) are disordered. A compositionally biased stretch (basic residues) spans 110–121 (QRKRQQYGKPKK). An I repeat occupies 141 to 438 (NPIRRACISI…LVLGVLSGEF (298 aa)). Residues 155-173 (PFEIIILLTIFANCVALAI) traverse the membrane as a helical segment. Over 174–188 (YIPFPEDDSNATNSN) the chain is Extracellular. Residue Asn183 is glycosylated (N-linked (GlcNAc...) asparagine). The chain crosses the membrane as a helical span at residues 189–209 (LERVEYLFLIIFTVEAFLKVI). Over 210-218 (AYGLLFHPN) the chain is Cytoplasmic. Residues 219–239 (AYLRNGWNLLDFIIVVVGLFS) form a helical membrane-spanning segment. Residues 240–262 (AILEQATKADGANALGGKGAGFD) lie on the Extracellular side of the membrane. The chain crosses the membrane as a helical span at residues 263–281 (VKALRAFRVLRPLRLVSGV). At 282–298 (PSLQVVLNSIIKAMVPL) the chain is on the cytoplasmic side. A helical transmembrane segment spans residues 299-320 (LHIALLVLFVIIIYAIIGLELF). Residues 321 to 380 (MGKMHKTCYNQEGVADVPAEDDPSPCALETGHGRQCQNGTVCKPGWDGPKHGITNFDNFA) lie on the Extracellular side of the membrane. Disulfide bonds link Cys328–Cys356 and Cys346–Cys362. The N-linked (GlcNAc...) asparagine glycan is linked to Asn358. The pore-forming intramembrane region spans 381–402 (FAMLTVFQCITMEGWTDVLYWM). The Selectivity filter of repeat I signature appears at 391-394 (TMEG). Glu393 contacts Ca(2+). The Extracellular portion of the chain corresponds to 403 to 410 (QDAMGYEL). A helical membrane pass occupies residues 411 to 431 (PWVYFVSLVIFGSFFVLNLVL). The Cytoplasmic segment spans residues 432 to 554 (GVLSGEFSKE…RKCRAAVKSN (123 aa)). The AID/alpha-interaction domain; mediates interaction with the beta subunit stretch occupies residues 458–475 (QQLEEDLKGYLDWITQAE). Positions 479 to 511 (PENEDEGMDEEKPRNMSMPTSETESVNTENVAG) are disordered. The segment covering 495–508 (SMPTSETESVNTEN) has biased composition (polar residues). Ser499 carries the post-translational modification Phosphoserine. Thr506 carries the post-translational modification Phosphothreonine. The II repeat unit spans residues 540-786 (NRFCRRKCRA…VFLAIAVDNL (247 aa)). The chain crosses the membrane as a helical span at residues 555 to 573 (VFYWLVIFLVFLNTLTIAS). Residues 574 to 584 (EHYNQPHWLTE) are Extracellular-facing. Residues 585 to 605 (VQDTANKALLALFTAEMLLKM) form a helical membrane-spanning segment. The Cytoplasmic portion of the chain corresponds to 606 to 616 (YSLGLQAYFVS). Residues 617 to 636 (LFNRFDCFIVCGGILETILV) form a helical membrane-spanning segment. Residues 637-645 (ETKVMSPLG) lie on the Extracellular side of the membrane. Residues 646-664 (ISVLRCVRLLRIFKITRYW) traverse the membrane as a helical segment. The Cytoplasmic portion of the chain corresponds to 665–683 (NSLSNLVASLLNSVRSIAS). Residues 684-703 (LLLLLFLFIIIFSLLGMQLF) form a helical membrane-spanning segment. Topologically, residues 704 to 723 (GGKFNFDEMQTRRSTFDNFP) are extracellular. The pore-forming intramembrane region spans 724–745 (QSLLTVFQILTGEDWNSVMYDG). The Selectivity filter of repeat II motif lies at 734 to 737 (TGED). Glu736 serves as a coordination point for Ca(2+). Over 746–755 (IMAYGGPSFP) the chain is Extracellular. A helical membrane pass occupies residues 756-775 (GMLVCIYFIILFICGNYILL). At 776–930 (NVFLAIAVDN…LQCHRIVNDT (155 aa)) the chain is on the cytoplasmic side. The segment at 794-891 (SAQKEEEEEK…EMPVGPRPRP (98 aa)) is disordered. Positions 813–836 (SPEKKQEVVGKPALEEAKEEKIEL) are enriched in basic and acidic residues. Phosphoserine is present on residues Ser838 and Ser845. The interval 859-906 (NESEDKSPYPNPETTGEEDEEEPEMPVGPRPRPLSELHLKEKAVPMPE) is interaction with STAC2. The span at 873 to 882 (TGEEDEEEPE) shows a compositional bias: acidic residues. Residues 917–1199 (NRFRLQCHRI…IFVGFVIVTF (283 aa)) form an III repeat. The chain crosses the membrane as a helical span at residues 931–949 (IFTNLILFFILLSSISLAA). Residues 950 to 961 (EDPVQHTSFRNH) lie on the Extracellular side of the membrane. A helical membrane pass occupies residues 962 to 981 (ILFYFDIVFTTIFTIEIALK). Topologically, residues 982-997 (MTAYGAFLHKGSFCRN) are cytoplasmic. The chain crosses the membrane as a helical span at residues 998 to 1016 (YFNILDLLVVSVSLISFGI). Residues 1017 to 1023 (QSSAINV) are Extracellular-facing. The helical transmembrane segment at 1024-1042 (VKILRVLRVLRPLRAINRA) threads the bilayer. Residues 1043–1061 (KGLKHVVQCVFVAIRTIGN) lie on the Cytoplasmic side of the membrane. The chain crosses the membrane as a helical span at residues 1062–1081 (IVIVTTLLQFMFACIGVQLF). The Extracellular segment spans residues 1082–1131 (KGKLYTCSDSSKQTEAECKGNYITYKDGEVDHPIIQPRSWENSKFDFDNV). A disulfide bond links Cys1088 and Cys1099. The dihydropyridine binding stretch occupies residues 1119–1208 (RSWENSKFDF…FQEQGEQEYK (90 aa)). The segment at residues 1132 to 1152 (LAAMMALFTVSTFEGWPELLY) is an intramembrane region (pore-forming). The Selectivity filter of repeat III motif lies at 1143 to 1146 (TFEG). Glu1145 serves as a coordination point for Ca(2+). Residues 1153 to 1169 (RSIDSHTEDKGPIYNYR) lie on the Extracellular side of the membrane. The chain crosses the membrane as a helical span at residues 1170–1191 (VEISIFFIIYIIIIAFFMMNIF). Residues 1192–1249 (VGFVIVTFQEQGEQEYKNCELDKNQRQCVEYALKARPLRRYIPKNQHQYKVWYVVNST) are Cytoplasmic-facing. Residues 1236–1509 (NQHQYKVWYV…LFVAVIMDNF (274 aa)) form an IV repeat. Residues 1250-1271 (YFEYLMFVLILLNTICLAMQHY) traverse the membrane as a helical segment. Residues 1272–1279 (GQSCLFKI) are Extracellular-facing. The helical transmembrane segment at 1280–1301 (AMNILNMLFTGLFTVEMILKLI) threads the bilayer. Over 1302–1311 (AFKPKGYFSD) the chain is Cytoplasmic. Residues 1312–1331 (PWNVFDFLIVIGSIIDVILS) traverse the membrane as a helical segment. Residues 1332-1354 (ETNPAEHTQCSPSMNAEENSRIS) are Extracellular-facing. A helical transmembrane segment spans residues 1355 to 1373 (ITFFRLFRVMRLVKLLSRG). At 1374–1391 (EGIRTLLWTFIKSFQALP) the chain is on the cytoplasmic side. The chain crosses the membrane as a helical span at residues 1392–1412 (YVALLIVMLFFIYAVIGMQVF). Over 1413–1434 (GKIALNDTTEINRNNNFQTFPQ) the chain is Extracellular. Asn1418 carries an N-linked (GlcNAc...) asparagine glycan. An intramembrane region (pore-forming) is located at residues 1435–1453 (AVLLLFRCATGEAWQDIML). Positions 1444–1447 (TGEA) match the Selectivity filter of repeat IV motif. At 1454-1481 (ACMPGKKCAPESEPHNSTEGETPCGSSF) the chain is on the extracellular side. Residues 1460–1528 (KCAPESEPHN…LGPHHLDEFK (69 aa)) form a dihydropyridine binding region. Residues Cys1461 and Cys1477 are joined by a disulfide bond. The N-linked (GlcNAc...) asparagine glycan is linked to Asn1469. The phenylalkylamine binding stretch occupies residues 1474–1516 (ETPCGSSFAVFYFISFYMLCAFLIINLFVAVIMDNFDYLTRDW). Residues 1482–1506 (AVFYFISFYMLCAFLIINLFVAVIM) form a helical membrane-spanning segment. Residues 1507-2171 (DNFDYLTRDW…ADRRAGVSSL (665 aa)) lie on the Cytoplasmic side of the membrane. The tract at residues 1641 to 1668 (DEVTVGKFYATFLIQEYFRKFKKRKEQG) is important for interaction with STAC1, STAC2 and STAC3. The calmodulin-binding IQ region stretch occupies residues 1647 to 1667 (KFYATFLIQEYFRKFKKRKEQ). The segment at 1681–1700 (LQAGLRTLHDIGPEIRRAIS) is important for localization in at the junctional membrane. Phosphoserine occurs at positions 1700 and 1721. Residues 1760–1797 (ISKAGNNQGDTESPSHEKLVDSTFTPSSYSSTGSNANI) are disordered. The segment covering 1781 to 1793 (STFTPSSYSSTGS) has biased composition (polar residues). Phosphoserine; by PKA is present on Ser1928. 3 disordered regions span residues 1971–2014 (RSHS…EKLN), 2026–2060 (SGEN…GRQF), and 2114–2155 (SGGA…PGCG). Residues 2130–2140 (NRRDPGRDRAG) are compositionally biased toward basic and acidic residues.

The protein belongs to the calcium channel alpha-1 subunit (TC 1.A.1.11) family. CACNA1C subfamily. In terms of assembly, component of a calcium channel complex consisting of a pore-forming alpha subunit (CACNA1C) and ancillary beta, gamma and delta subunits. The channel complex contains alpha, beta, gamma and delta subunits in a 1:1:1:1 ratio, i.e. it contains only one of each type of subunit. CACNA1C channel activity is modulated by ancillary subunits, such as CACNB1, CACNB2, CACNB3, CACNA2D1 and CACNA2D4. Interacts with CACNB1. Interacts with CACNB2. Identified in a complex with CACNA2D4 and CACNB3. Interacts with CACNB3. Interacts with CACNA2D1. Interacts with the gamma subunits CACNG4, CACNG6, CACNG7 and CACNG8. Interacts with CACNA2D4. Interacts with CALM1. Interacts (via the N-terminus and the C-terminal C and IQ motifs) with CABP1; this inhibits Ca(2+)-dependent channel inactivation. The binding via the C motif is calcium independent whereas the binding via IQ requires the presence of calcium and is mutually exclusive with calmodulin binding. The binding to the cytoplasmic N-terminal domain is calcium independent but is essential for the channel modulation. Interacts (via C-terminal CDB motif) with CABP5; in a calcium-dependent manner. Interacts with CIB1; the interaction increases upon cardiomyocytes hypertrophy. Interacts with STAC1, STAC2 and STAC3; this inhibits channel inactivation, probably by hindering CALM1 binding. Phosphorylation by PKA at Ser-1928 activates the channel. Elevated levels of blood glucose lead to increased phosphorylation by PKA. In terms of tissue distribution, expression in cardiac muscle. In lung, expressed in airway and vascular smooth muscle cells.

Its subcellular location is the cell membrane. The protein localises to the sarcolemma. It is found in the perikaryon. It localises to the postsynaptic density membrane. The protein resides in the cell projection. Its subcellular location is the dendrite. The protein localises to the T-tubule. The enzyme catalyses Ca(2+)(in) = Ca(2+)(out). With respect to regulation, inhibited by dihydropyridines (DHP), such as isradipine. Inhibited by nifedipine. Channel activity is regulated by Ca(2+) and calmodulin. Binding of STAC1, STAC2 or STAC3 to a region that overlaps with the calmodulin binding site inhibits channel inactivation by Ca(2+) and calmodulin. Binding of calmodulin or CABP1 at the same regulatory sites results in opposite effects on the channel function. Shear stress and pressure increases calcium channel activity. In terms of biological role, pore-forming, alpha-1C subunit of the voltage-gated calcium channel that gives rise to L-type calcium currents. Mediates influx of calcium ions into the cytoplasm, and thereby triggers calcium release from the sarcoplasm. Plays an important role in excitation-contraction coupling in the heart. Required for normal heart development and normal regulation of heart rhythm. Required for normal contraction of smooth muscle cells in blood vessels and in the intestine. Essential for normal blood pressure regulation via its role in the contraction of arterial smooth muscle cells. Long-lasting (L-type) calcium channels belong to the 'high-voltage activated' (HVA) group. The polypeptide is Voltage-dependent L-type calcium channel subunit alpha-1C (CACNA1C) (Oryctolagus cuniculus (Rabbit)).